We begin with the raw amino-acid sequence, 107 residues long: Large ribosomal subunit protein uL24 (107 aa).

Belongs to the universal ribosomal protein uL24 family. In terms of assembly, part of the 50S ribosomal subunit.

One of two assembly initiator proteins, it binds directly to the 5'-end of the 23S rRNA, where it nucleates assembly of the 50S subunit. In terms of biological role, one of the proteins that surrounds the polypeptide exit tunnel on the outside of the subunit. The chain is Large ribosomal subunit protein uL24 from Nitratidesulfovibrio vulgaris (strain ATCC 29579 / DSM 644 / CCUG 34227 / NCIMB 8303 / VKM B-1760 / Hildenborough) (Desulfovibrio vulgaris).